The sequence spans 73 residues: Large ribosomal subunit protein bL31 (73 aa).

Positions 16, 18, 36, and 39 each coordinate Zn(2+).

This sequence belongs to the bacterial ribosomal protein bL31 family. Type A subfamily. As to quaternary structure, part of the 50S ribosomal subunit. Requires Zn(2+) as cofactor.

In terms of biological role, binds the 23S rRNA. The protein is Large ribosomal subunit protein bL31 of Desulfosudis oleivorans (strain DSM 6200 / JCM 39069 / Hxd3) (Desulfococcus oleovorans).